The sequence spans 327 residues: Ribosomal RNA large subunit methyltransferase F (327 aa).

A disordered region spans residues 1-24 (MPRKTSSQPRPAEPKAVLHPRNRH).

The protein belongs to the methyltransferase superfamily. METTL16/RlmF family.

Its subcellular location is the cytoplasm. The catalysed reaction is adenosine(1618) in 23S rRNA + S-adenosyl-L-methionine = N(6)-methyladenosine(1618) in 23S rRNA + S-adenosyl-L-homocysteine + H(+). Its function is as follows. Specifically methylates the adenine in position 1618 of 23S rRNA. This is Ribosomal RNA large subunit methyltransferase F from Stutzerimonas stutzeri (strain A1501) (Pseudomonas stutzeri).